The sequence spans 313 residues: Hydroxyphenylpyruvate reductase (313 aa).

Residues 152-155, 174-176, and Ile-230 contribute to the NADP(+) site; these read LGRI and SRS. Residue Arg-232 is part of the active site. Residue Asp-256 coordinates NADP(+). The active site involves Glu-261. His-279 serves as the catalytic Proton donor.

This sequence belongs to the D-isomer specific 2-hydroxyacid dehydrogenase family.

It carries out the reaction (2R)-2-hydroxy-3-(4-hydroxyphenyl)propanoate + NAD(+) = 3-(4-hydroxyphenyl)pyruvate + NADH + H(+). The enzyme catalyses (2R)-2-hydroxy-3-(4-hydroxyphenyl)propanoate + NADP(+) = 3-(4-hydroxyphenyl)pyruvate + NADPH + H(+). The catalysed reaction is (2R)-3-(3,4-dihydroxyphenyl)lactate + NADP(+) = 3-(3,4-dihydroxyphenyl)pyruvate + NADPH + H(+). It catalyses the reaction (2R)-3-(3,4-dihydroxyphenyl)lactate + NAD(+) = 3-(3,4-dihydroxyphenyl)pyruvate + NADH + H(+). Catalyzes the NAD(P)H-dependent reduction of 4-hydroxyphenylpyruvate to 4-hydroxyphenyllactate and 3,4-dihydroxyphenylpyruvate to 3,4-dihydroxyphenyllactate in the biosynthesis of rosmarinic acid. Rosmarinic acid is an ester of caffeic acid and 3,4-dihydroxyphenyllactic acid. NADP is the preferred substrate. This chain is Hydroxyphenylpyruvate reductase (HPPR), found in Plectranthus scutellarioides (Coleus).